Reading from the N-terminus, the 433-residue chain is MAPAGRKLQHESRCRPSRPVDAWRAAATTRGRCMGTPGARRTARRGGWGLPRTSSGLAAAGLLCTALTACLCWGQLPPLPWASPAPQRPVSVLLWWEPFGGRGGHSKPPPDCSLRFNISGCRLLTDRAAYGEAQAVLFHHRDLVKGPPDWPPPWGAQERTDEALELRVFDDQEGAVMLAREALETTGSRPPGQRWVWMNFESPSHTPGLRGLAKDLFNWTLSYRTDSDIFVPYGFLYPRSHPAEQPSGLGPPLARKRGLVAWVVSHWNERQARVRYYHQLRRHVSVDVFGRAGPGQPVPAVGLLHTVARYKFYLAFENSQHVDYNTEKLWRNAFLAGAVPVLLGPDRANYEGFVPRGSFIHVDDFPSAASLAAYLLFLDRNVAVYRRYFHWRRSYAVHITSFWDEPWCQTCRAVQTSGDQPKSIHNLADWFQR.

Positions 1 to 20 (MAPAGRKLQHESRCRPSRPV) are disordered. Topologically, residues 1–54 (MAPAGRKLQHESRCRPSRPVDAWRAAATTRGRCMGTPGARRTARRGGWGLPRTS) are cytoplasmic. A helical; Signal-anchor for type II membrane protein transmembrane segment spans residues 55-74 (SGLAAAGLLCTALTACLCWG). The Lumenal segment spans residues 75–433 (QLPPLPWASP…IHNLADWFQR (359 aa)). Residues N117 and N218 are each glycosylated (N-linked (GlcNAc...) asparagine).

This sequence belongs to the glycosyltransferase 10 family. As to expression, in adult, highest expression in spleen, testis, brain, lung, kidney and skeletal muscle and to a lesser extent in liver and heart.

The protein resides in the golgi apparatus. It localises to the golgi stack membrane. The catalysed reaction is a beta-D-galactosyl-(1-&gt;4)-N-acetyl-beta-D-glucosaminyl derivative + GDP-beta-L-fucose = a beta-D-galactosyl-(1-&gt;4)-[alpha-L-fucosyl-(1-&gt;3)]-N-acetyl-beta-D-glucosaminyl derivative + GDP + H(+). The enzyme catalyses an N-acetyl-alpha-neuraminyl-(2-&gt;3)-beta-D-galactosyl-(1-&gt;4)-N-acetyl-beta-D-glucosaminyl derivative + GDP-beta-L-fucose = an alpha-Neu5Ac-(2-&gt;3)-beta-D-Gal-(1-&gt;4)-[alpha-L-Fuc-(1-&gt;3)]-beta-D-GlcNAc derivative + GDP + H(+). It catalyses the reaction an alpha-Neu5Ac-(2-&gt;3)-beta-D-Gal-(1-&gt;4)-beta-D-GlcNAc-(1-&gt;3)-beta-D-Gal-(1-&gt;4)-beta-D-GlcNAc derivative + GDP-beta-L-fucose = an alpha-Neu5Ac-(2-&gt;3)-beta-D-Gal-(1-&gt;4)-beta-D-GlcNAc-(1-&gt;3)-beta-D-Gal-(1-&gt;4)-[alpha-L-Fuc-(1-&gt;3)]-beta-D-GlcNAc derivative + GDP + H(+). It carries out the reaction an alpha-Neu5Ac-(2-&gt;3)-beta-D-Gal-(1-&gt;4)-beta-D-GlcNAc6S derivative + GDP-beta-L-fucose = an alpha-Neu5Ac-(2-&gt;3)-beta-D-Gal-(1-&gt;4)-[alpha-L-Fuc-(1-&gt;3)]-beta-D-GlcNAc6S derivative + GDP + H(+). It participates in protein modification; protein glycosylation. Functionally, catalyzes alpha(1-&gt;3) linkage of fucosyl moiety transferred from GDP-beta-L-fucose to N-acetyl glucosamine (GlcNAc) within type 2 lactosamine (LacNAc, Gal-beta(1-&gt;4)GlcNAc) glycan attached to N- or O-linked glycoproteins. Robustly fucosylates nonsialylated distal LacNAc unit of the polylactosamine chain to form Lewis X antigen (CD15), a glycan determinant known to mediate important cellular functions in development and immunity. Fucosylates with lower efficiency sialylated LacNAc acceptors to form sialyl Lewis X and 6-sulfo sialyl Lewis X determinants that serve as recognition epitopes for C-type lectins. Together with FUT7 contributes to SELE, SELL and SELP selectin ligand biosynthesis and selectin-dependent lymphocyte homing, leukocyte migration and blood leukocyte homeostasis. In a cell type specific manner, may also fucosylate the internal LacNAc unit of the polylactosamine chain to form VIM-2 antigen that serves as recognition epitope for SELE. The polypeptide is Alpha-(1,3)-fucosyltransferase 4 (Fut4) (Rattus norvegicus (Rat)).